A 1770-amino-acid chain; its full sequence is Transposon Ty2-C Gag-Pol polyprotein (1770 aa).

Polar residues-rich tracts occupy residues 1 to 11, 19 to 39, and 49 to 60; these read MESQQLHQNPR, ASVT…SASN, and KVNSQQETTPGT. Disordered regions lie at residues 1 to 88 and 355 to 453; these read MESQ…YQQH and SQYK…LPDH. The segment at 295–397 is RNA-binding; that stretch reads ENNINVSDRL…SSKPRAAKAH (103 aa). Residues 369–382 are compositionally biased toward low complexity; it reads TSPNTTNTKVTTRN. Composition is skewed to polar residues over residues 399 to 408 and 415 to 435; these read IATSSKFSRV and ESTV…GQQQ. Asp-457 (for protease activity; shared with dimeric partner) is an active-site residue. The tract at residues 579-636 is integrase-type zinc finger-like; the sequence is NVNKSKSVNKYPYPLIHRMLGHANFRSIQKSLKKNAVTYLKESDIEWSNASTYQCPDC. Residues 656–831 form the Integrase catalytic domain; it reads ESYEPFQYLH…AGLDITTILP (176 aa). The Mg(2+) site is built by Asp-667 and Asp-732. 2 disordered regions span residues 1003–1038 and 1057–1205; these read EMGG…MIDL and GGTE…TEIE. Composition is skewed to polar residues over residues 1009–1024 and 1065–1082; these read ESDT…FTAR and QRNS…STPS. The Bipartite nuclear localization signal motif lies at 1193 to 1227; sequence KKRSLEDNETEIEVSRDTWNNKNMRSLEPPRSKKR. Positions 1353–1491 constitute a Reverse transcriptase Ty1/copia-type domain; it reads NDYYITQLDI…DILGLEIKYQ (139 aa). Positions 1361, 1442, 1443, 1625, 1667, and 1700 each coordinate Mg(2+). One can recognise an RNase H Ty1/copia-type domain in the interval 1625 to 1767; the sequence is DASYGNQPYY…IKTFKLLTNK (143 aa).

In terms of assembly, the capsid protein forms a homotrimer, from which the VLPs are assembled. The protease is a homodimer, whose active site consists of two apposed aspartic acid residues. Initially, virus-like particles (VLPs) are composed of the structural unprocessed proteins Gag and Gag-Pol, and also contain the host initiator methionine tRNA (tRNA(i)-Met) which serves as a primer for minus-strand DNA synthesis, and a dimer of genomic Ty RNA. Processing of the polyproteins occurs within the particle and proceeds by an ordered pathway, called maturation. First, the protease (PR) is released by autocatalytic cleavage of the Gag-Pol polyprotein, and this cleavage is a prerequisite for subsequent processing at the remaining sites to release the mature structural and catalytic proteins. Maturation takes place prior to the RT reaction and is required to produce transposition-competent VLPs.

It is found in the cytoplasm. The protein localises to the nucleus. It catalyses the reaction DNA(n) + a 2'-deoxyribonucleoside 5'-triphosphate = DNA(n+1) + diphosphate. The enzyme catalyses Endonucleolytic cleavage to 5'-phosphomonoester.. Functionally, capsid protein (CA) is the structural component of the virus-like particle (VLP), forming the shell that encapsulates the retrotransposons dimeric RNA genome. The particles are assembled from trimer-clustered units and there are holes in the capsid shells that allow for the diffusion of macromolecules. CA also has nucleocapsid-like chaperone activity, promoting primer tRNA(i)-Met annealing to the multipartite primer-binding site (PBS), dimerization of Ty2 RNA and initiation of reverse transcription. The aspartyl protease (PR) mediates the proteolytic cleavages of the Gag and Gag-Pol polyproteins after assembly of the VLP. In terms of biological role, reverse transcriptase/ribonuclease H (RT) is a multifunctional enzyme that catalyzes the conversion of the retro-elements RNA genome into dsDNA within the VLP. The enzyme displays a DNA polymerase activity that can copy either DNA or RNA templates, and a ribonuclease H (RNase H) activity that cleaves the RNA strand of RNA-DNA heteroduplexes during plus-strand synthesis and hydrolyzes RNA primers. The conversion leads to a linear dsDNA copy of the retrotransposon that includes long terminal repeats (LTRs) at both ends. Its function is as follows. Integrase (IN) targets the VLP to the nucleus, where a subparticle preintegration complex (PIC) containing at least integrase and the newly synthesized dsDNA copy of the retrotransposon must transit the nuclear membrane. Once in the nucleus, integrase performs the integration of the dsDNA into the host genome. The protein is Transposon Ty2-C Gag-Pol polyprotein (TY2B-C) of Saccharomyces cerevisiae (strain ATCC 204508 / S288c) (Baker's yeast).